The sequence spans 118 residues: V-type proton ATPase subunit G 3 (118 aa).

The stretch at 3–54 (SQSQGIQQLLQAEKRAKDKLEEAKKRKNKRLRQAKEEATADIDQYRLKREAD) forms a coiled coil. A disordered region spans residues 19-39 (KDKLEEAKKRKNKRLRQAKEE).

This sequence belongs to the V-ATPase G subunit family. In terms of assembly, V-ATPase is a heteromultimeric enzyme made up of two complexes: the ATP-hydrolytic V1 complex and the proton translocation V0 complex. The V1 complex consists of three catalytic AB heterodimers that form a heterohexamer, three peripheral stalks each consisting of EG heterodimers, one central rotor including subunits D and F, and the regulatory subunits C and H. The proton translocation complex V0 consists of the proton transport subunit a, a ring of proteolipid subunits c9c'', rotary subunit d, subunits e and f, and two accessory subunits.

Subunit of the V1 complex of vacuolar(H+)-ATPase (V-ATPase), a multisubunit enzyme composed of a peripheral complex (V1) that hydrolyzes ATP and a membrane integral complex (V0) that translocates protons. V-ATPase is responsible for acidifying and maintaining the pH of intracellular compartments and in some cell types, is targeted to the plasma membrane, where it is responsible for acidifying the extracellular environment. In Xenopus laevis (African clawed frog), this protein is V-type proton ATPase subunit G 3 (atp6v1g3).